The chain runs to 285 residues: uncharacterized protein (285 aa).

Residues 92–199 enclose the Guanylate cyclase domain; that stretch reads TLLLADVEES…PTINRTARLR (108 aa).

The protein belongs to the adenylyl cyclase class-4/guanylyl cyclase family.

This is an uncharacterized protein from Mycobacterium tuberculosis (strain CDC 1551 / Oshkosh).